The primary structure comprises 756 residues: Subtilisin-like protease SBT3.9 (756 aa).

The signal sequence occupies residues 1–25 (MSKTILFLALFLSIVLNVQISFVVA). Residues 26–108 (ESKVYVVYLG…VIPNTLYEMT (83 aa)) constitute a propeptide, activation peptide. Residues 29–106 (VYVVYLGEKE…VQVIPNTLYE (78 aa)) form the Inhibitor I9 domain. The 492-residue stretch at 112-603 (TWDYLGVSPG…GGLINPEKAV (492 aa)) folds into the Peptidase S8 domain. The active-site Charge relay system is Asp-142. Asn-175 and Asn-202 each carry an N-linked (GlcNAc...) asparagine glycan. The active-site Charge relay system is the His-218. Residues Asn-233, Asn-357, Asn-395, and Asn-519 are each glycosylated (N-linked (GlcNAc...) asparagine). In terms of domain architecture, PA spans 386-460 (DCEKLSANPN…ELGTDILFYI (75 aa)). The Charge relay system role is filled by Ser-534.

The protein belongs to the peptidase S8 family.

It is found in the secreted. The sequence is that of Subtilisin-like protease SBT3.9 from Arabidopsis thaliana (Mouse-ear cress).